Here is a 172-residue protein sequence, read N- to C-terminus: Translationally-controlled tumor protein (172 aa).

Residues 1-172 form the TCTP domain; the sequence is MIIYRDLISH…FKDGLEMEKC (172 aa). The residue at position 46 (S46) is a Phosphoserine; by PLK1. At S53 the chain carries Phosphoserine. S64 carries the phosphoserine; by PLK1 modification. Residues 70-172 form a required for reduction of TSC22D1 protein stability region; the sequence is VDIVMNHHLQ…FKDGLEMEKC (103 aa).

Belongs to the TCTP family. Homodimer. Interacts with STEAP3. Interacts with TSC22D1; interaction results in the destabilization of TSC22D1 protein.

It is found in the cytoplasm. Functionally, involved in calcium binding and microtubule stabilization. Acts as a negative regulator of TSC22D1-mediated apoptosis, via interaction with and destabilization of TSC22D1 protein. This is Translationally-controlled tumor protein (TPT1) from Bos taurus (Bovine).